A 1292-amino-acid polypeptide reads, in one-letter code: Epidermal growth factor receptor (1292 aa).

Over methionine 1 to proline 641 the chain is Extracellular. Residues asparagine 31, asparagine 224, asparagine 263, asparagine 323, asparagine 342, asparagine 600, and asparagine 605 are each glycosylated (N-linked (GlcNAc...) asparagine). The helical transmembrane segment at alanine 642–methionine 662 threads the bilayer. The Cytoplasmic portion of the chain corresponds to tyrosine 663–valine 1292. Residue threonine 675 is modified to Phosphothreonine; by PKC. A Protein kinase domain is found at methionine 711–leucine 978. ATP-binding positions include leucine 717–valine 725 and lysine 744. Aspartate 836 (proton acceptor) is an active-site residue. A disordered region spans residues proline 1022 to glutamine 1066. Tyrosine 1166 carries the post-translational modification Phosphotyrosine; by autocatalysis. The interval serine 1253 to valine 1292 is disordered. The segment covering arginine 1258–valine 1292 has biased composition (basic and acidic residues).

The protein belongs to the protein kinase superfamily. Tyr protein kinase family. EGF receptor subfamily.

It is found in the membrane. The enzyme catalyses L-tyrosyl-[protein] + ATP = O-phospho-L-tyrosyl-[protein] + ADP + H(+). With respect to regulation, activated by MRJP1 during queen determination of honeybee larvae. Functionally, upon binding to its ligands, transduces the signal through the ras-raf-MAPK pathway and is involved in a myriad of developmental decisions. Involved in the determination of adult size, ovary development, and development timing, especially during queen determination of honeybee larvae. May have an important role in the prolongation of longevity in queens. The polypeptide is Epidermal growth factor receptor (Egfr) (Apis mellifera (Honeybee)).